Reading from the N-terminus, the 34-residue chain is Phalloidin proprotein (34 aa).

The propeptide occupies 1–10 (MSDINASRLP). A cross-link (cyclopeptide (Ala-Pro)) is located at residues 11 to 17 (AWLATCP). The segment at residues 12-16 (WLATC) is a cross-link (2'-cysteinyl-6'-hydroxytryptophan sulfoxide (Trp-Cys)). The propeptide occupies 18 to 34 (CVGDDVNPTLSRGESLC).

This sequence belongs to the MSDIN fungal toxin family. Post-translationally, processed by the macrocyclase-peptidase enzyme POPB to yield a toxic cyclic heptapeptide. POPB first removes 10 residues from the N-terminus. Conformational trapping of the remaining peptide forces the enzyme to release this intermediate rather than proceed to macrocyclization. The enzyme rebinds the remaining peptide in a different conformation and catalyzes macrocyclization of the N-terminal 7 residues.

In terms of biological role, toxin that belongs to the bicyclic heptapeptides called phallotoxins. Although structurally related to amatoxins, phallotoxins have a different mode of action, which is the stabilization of F-actin. Phallotoxins are poisonous when administered parenterally, but not orally because of poor absorption. This Amanita phalloides (Death cap) protein is Phalloidin proprotein.